Consider the following 434-residue polypeptide: Trigger factor (434 aa).

Residues 160-245 (DDKVKMNFIG…LTEVQAANLP (86 aa)) enclose the PPIase FKBP-type domain.

This sequence belongs to the FKBP-type PPIase family. Tig subfamily.

It localises to the cytoplasm. It catalyses the reaction [protein]-peptidylproline (omega=180) = [protein]-peptidylproline (omega=0). Functionally, involved in protein export. Acts as a chaperone by maintaining the newly synthesized protein in an open conformation. Functions as a peptidyl-prolyl cis-trans isomerase. This is Trigger factor from Shewanella frigidimarina (strain NCIMB 400).